A 376-amino-acid chain; its full sequence is 3-aminomethylindole N-methyltransferase (376 aa).

Positions 220, 243, 263, and 264 each coordinate S-adenosyl-L-homocysteine.

It belongs to the class I-like SAM-binding methyltransferase superfamily. Cation-independent O-methyltransferase family. In terms of tissue distribution, more present in the fifth leaf than in the second leaf (at protein level).

The enzyme catalyses 3-(aminomethyl)indole + 2 S-adenosyl-L-methionine = gramine + 2 S-adenosyl-L-homocysteine + 2 H(+). It participates in alkaloid biosynthesis. Its activity is regulated as follows. Repressed by sodium carbonate, sodium bicarbonate and K-phosphate. Functionally, methylates 3-aminomethylindole (AMI) and N-methyl-3-aminomethylindole (MAMI), two substrates involved in gramine biosynthesis, a toxic indole alkaloid. Can use S-adenosyl-L-methionine (AdoMet) as a methyl donor. Unable to mediate caffeic acid O-methylation. This Hordeum vulgare subsp. vulgare (Domesticated barley) protein is 3-aminomethylindole N-methyltransferase.